Reading from the N-terminus, the 67-residue chain is Large ribosomal subunit protein uL29 (67 aa).

This sequence belongs to the universal ribosomal protein uL29 family.

This is Large ribosomal subunit protein uL29 from Desulfitobacterium hafniense (strain Y51).